The following is a 1283-amino-acid chain: Bifunctional dioxygenase (DOX)-epoxy alcohol synthase (EAS) (1283 aa).

The tract at residues 1–64 (MAEHKNGVAT…LPKEMGDGSY (64 aa)) is disordered. The tract at residues 130–476 (TNSFISQLWN…DGKFNDDELV (347 aa)) is fatty acid alpha-dioxygenase. Residue H227 coordinates heme b. The active site involves Y405. Residue H408 coordinates heme b. The epoxy alcohol synthase stretch occupies residues 684 to 1108 (INIIGYNAAK…WDDGCGTDLF (425 aa)). Residue C1035 coordinates heme.

This sequence in the N-terminal section; belongs to the peroxidase family. It in the C-terminal section; belongs to the cytochrome P450 family. As to quaternary structure, homotetramer. Requires heme b as cofactor. Heme serves as cofactor.

It catalyses the reaction (9Z,12Z)-octadecadienoate + O2 = (8E,10R,12Z)-10-hydroperoxyoctadeca-8,12-dienoate. It carries out the reaction (8E,10R,12Z)-10-hydroperoxyoctadeca-8,12-dienoate = (12S,13R)-epoxy-(10R)-hydroxy-(8E)-octadecenoate. The enzyme catalyses (9Z)-octadecenoate + O2 = (8R)-hydroperoxy-(9Z)-octadecenoate. In terms of biological role, bifunctional dioxygenase (DOX)-epoxy alcohol synthase (EAS) that converts linoleic acid (18:2n-6) sequentially to 10(R)-hydroperoxy-8(E),12(Z)-octadecadienoic acid (10R-HPODE) and 10R-HPODE further to 12(13)-epoxy-10-hydroxy-8(E)-octa-decenoic acid as the end product. Linoleic acid is oxidized mainly to the R stereoisomer of 10-HPODE. The dioxygenase domain is also able to oygenate position C-8 of linoleic acid to produce 8(R)-hydroperoxy-8(E),12(Z)-octadecadienoic acid (8R-HPODE). The sequence is that of Bifunctional dioxygenase (DOX)-epoxy alcohol synthase (EAS) from Fusarium oxysporum (strain Fo5176) (Fusarium vascular wilt).